Reading from the N-terminus, the 315-residue chain is Glycine--tRNA ligase alpha subunit (315 aa).

Belongs to the class-II aminoacyl-tRNA synthetase family. In terms of assembly, tetramer of two alpha and two beta subunits.

The protein localises to the cytoplasm. It catalyses the reaction tRNA(Gly) + glycine + ATP = glycyl-tRNA(Gly) + AMP + diphosphate. In Pseudomonas syringae pv. tomato (strain ATCC BAA-871 / DC3000), this protein is Glycine--tRNA ligase alpha subunit.